We begin with the raw amino-acid sequence, 151 residues long: Probable ubiquitin-conjugating enzyme E2 W-A (151 aa).

Residues 3-151 (SMQKRLQKEL…TKWWYHDDTC (149 aa)) form the UBC core domain. Cys91 acts as the Glycyl thioester intermediate in catalysis.

This sequence belongs to the ubiquitin-conjugating enzyme family.

The protein localises to the nucleus. It catalyses the reaction S-ubiquitinyl-[E1 ubiquitin-activating enzyme]-L-cysteine + [E2 ubiquitin-conjugating enzyme]-L-cysteine = [E1 ubiquitin-activating enzyme]-L-cysteine + S-ubiquitinyl-[E2 ubiquitin-conjugating enzyme]-L-cysteine.. The catalysed reaction is S-ubiquitinyl-[E1 ubiquitin-activating enzyme]-L-cysteine + [acceptor protein]-N-terminal-amino acid = [E1 ubiquitin-activating enzyme]-L-cysteine + N-terminal-ubiquitinyl-[acceptor protein].. It participates in protein modification; protein ubiquitination. In terms of biological role, accepts ubiquitin from the E1 complex and catalyzes its covalent attachment to other proteins. Catalyzes monoubiquitination. Involved in degradation of misfolded chaperone substrate and DNA repair. The protein is Probable ubiquitin-conjugating enzyme E2 W-A (ube2wa) of Danio rerio (Zebrafish).